A 190-amino-acid chain; its full sequence is Large ribosomal subunit protein uL6 (190 aa).

The protein belongs to the universal ribosomal protein uL6 family.

The chain is Large ribosomal subunit protein uL6 (RpL9) from Spodoptera frugiperda (Fall armyworm).